The primary structure comprises 263 residues: Protein phosphatase type 2A regulatory subunit RTS3 (263 aa).

Disordered stretches follow at residues 1–62 and 149–176; these read MIAT…AQRR and LPLT…ISNG. Residues 46–61 show a composition bias toward low complexity; sequence LSTSSSPSSSPMSAQR. Phosphoserine is present on residues Ser-172, Ser-192, Ser-214, and Ser-238.

The protein resides in the cytoplasm. It localises to the nucleus. May be a component of a protein phosphatase type 2A (PP2A) complex. Negatively regulates SIT4 phosphatase, a modulators of caffeine sensitivity. In Saccharomyces cerevisiae (strain ATCC 204508 / S288c) (Baker's yeast), this protein is Protein phosphatase type 2A regulatory subunit RTS3 (RTS3).